The following is a 930-amino-acid chain: Isoleucine--tRNA ligase (930 aa).

Positions 57–67 (PYANGNIHVGH) match the 'HIGH' region motif. L-isoleucyl-5'-AMP is bound at residue E554. A 'KMSKS' region motif is present at residues 595–599 (KMSKS). Position 598 (K598) interacts with ATP. C888, C891, C908, and C911 together coordinate Zn(2+).

This sequence belongs to the class-I aminoacyl-tRNA synthetase family. IleS type 1 subfamily. In terms of assembly, monomer. Zn(2+) serves as cofactor.

It is found in the cytoplasm. The catalysed reaction is tRNA(Ile) + L-isoleucine + ATP = L-isoleucyl-tRNA(Ile) + AMP + diphosphate. Functionally, catalyzes the attachment of isoleucine to tRNA(Ile). As IleRS can inadvertently accommodate and process structurally similar amino acids such as valine, to avoid such errors it has two additional distinct tRNA(Ile)-dependent editing activities. One activity is designated as 'pretransfer' editing and involves the hydrolysis of activated Val-AMP. The other activity is designated 'posttransfer' editing and involves deacylation of mischarged Val-tRNA(Ile). This is Isoleucine--tRNA ligase from Streptococcus pneumoniae serotype 4 (strain ATCC BAA-334 / TIGR4).